A 488-amino-acid polypeptide reads, in one-letter code: Bifunctional protein HldE (488 aa).

Positions 1 to 330 (MIDFDGLSNA…RNILPPASLA (330 aa)) are ribokinase. 205 to 208 (NSKE) contacts ATP. The active site involves aspartate 275. The tract at residues 358–488 (FTNGCFDILH…TSLVKRAGGA (131 aa)) is cytidylyltransferase.

The protein in the N-terminal section; belongs to the carbohydrate kinase PfkB family. This sequence in the C-terminal section; belongs to the cytidylyltransferase family. As to quaternary structure, homodimer.

It catalyses the reaction D-glycero-beta-D-manno-heptose 7-phosphate + ATP = D-glycero-beta-D-manno-heptose 1,7-bisphosphate + ADP + H(+). The catalysed reaction is D-glycero-beta-D-manno-heptose 1-phosphate + ATP + H(+) = ADP-D-glycero-beta-D-manno-heptose + diphosphate. Its pathway is nucleotide-sugar biosynthesis; ADP-L-glycero-beta-D-manno-heptose biosynthesis; ADP-L-glycero-beta-D-manno-heptose from D-glycero-beta-D-manno-heptose 7-phosphate: step 1/4. It functions in the pathway nucleotide-sugar biosynthesis; ADP-L-glycero-beta-D-manno-heptose biosynthesis; ADP-L-glycero-beta-D-manno-heptose from D-glycero-beta-D-manno-heptose 7-phosphate: step 3/4. In terms of biological role, catalyzes the phosphorylation of D-glycero-D-manno-heptose 7-phosphate at the C-1 position to selectively form D-glycero-beta-D-manno-heptose-1,7-bisphosphate. Functionally, catalyzes the ADP transfer from ATP to D-glycero-beta-D-manno-heptose 1-phosphate, yielding ADP-D-glycero-beta-D-manno-heptose. In Nitrobacter winogradskyi (strain ATCC 25391 / DSM 10237 / CIP 104748 / NCIMB 11846 / Nb-255), this protein is Bifunctional protein HldE.